Here is a 411-residue protein sequence, read N- to C-terminus: 6-hydroxytryprostatin B O-methyltransferase (411 aa).

Aspartate 270 provides a ligand contact to S-adenosyl-L-methionine. Histidine 313 (proton acceptor) is an active-site residue.

The protein belongs to the class I-like SAM-binding methyltransferase superfamily. Cation-independent O-methyltransferase family. In terms of assembly, homodimer.

It catalyses the reaction 6-hydroxytryprostatin B + S-adenosyl-L-methionine = tryprostatin A + S-adenosyl-L-homocysteine + H(+). Its pathway is alkaloid biosynthesis. 6-hydroxytryprostatin B O-methyltransferase; part of the gene cluster that mediates the biosynthesis of fumitremorgins, indole alkaloids that carry not only intriguing chemical structures, but also interesting biological and pharmacological activities. The biosynthesis of fumitremorgin-type alkaloids begins by condensation of the two amino acids L-tryptophan and L-proline to brevianamide F, catalyzed by the non-ribosomal peptide synthetase ftmPS/ftmA. Brevianamide F is then prenylated by the prenyltransferase ftmPT1/ftmB in the presence of dimethylallyl diphosphate, resulting in the formation of tryprostatin B. The three cytochrome P450 monooxygenases, ftmP450-1/ftmC, ftmP450-2/ftmE and ftmP450-3/FtmG, are responsible for the conversion of tryprostatin B to 6-hydroxytryprostatin B, tryprostatin A to fumitremorgin C and fumitremorgin C to 12,13-dihydroxyfumitremorgin C, respectively. The putative methyltransferase ftmMT/ftmD is expected for the conversion of 6-hydroxytryprostatin B to tryprostatin A. FtmPT2/FtmH catalyzes the prenylation of 12,13-dihydroxyfumitre-morgin C in the presence of dimethylallyl diphosphate, resulting in the formation of fumitremorgin B. Fumitremorgin B is further converted to verruculogen by ftmOx1/ftmF via the insertion of an endoperoxide bond between the two prenyl moieties. Finally, verruculogen is further converted to fumitremorgin A by the verruculogen prenyltransferase ftmPT3. The polypeptide is 6-hydroxytryprostatin B O-methyltransferase (Neosartorya fischeri (strain ATCC 1020 / DSM 3700 / CBS 544.65 / FGSC A1164 / JCM 1740 / NRRL 181 / WB 181) (Aspergillus fischerianus)).